The following is a 253-amino-acid chain: CD151 antigen (253 aa).

Topologically, residues Met1–Tyr18 are cytoplasmic. S-palmitoyl cysteine attachment occurs at residues Cys11 and Cys15. The chain crosses the membrane as a helical span at residues Leu19–Ile39. Residues Trp40–Tyr57 lie on the Extracellular side of the membrane. The helical transmembrane segment at Leu58 to Gly78 threads the bilayer. Residues Cys79–Arg91 lie on the Cytoplasmic side of the membrane. Residues Leu92–Tyr112 form a helical membrane-spanning segment. The Extracellular portion of the chain corresponds to Val113 to Arg221. N-linked (GlcNAc...) asparagine glycosylation is present at Asn159. A helical transmembrane segment spans residues Val222–Cys242. S-palmitoyl cysteine attachment occurs at residues Cys242 and Cys243. Residues Cys243–Tyr253 are Cytoplasmic-facing.

It belongs to the tetraspanin (TM4SF) family. As to quaternary structure, interacts with integrins ITGA3:ITGB1, ITGA5:ITGB1, ITGA3:ITGB1 and ITGA6:ITGB4 and with CD9 and CD181. Interacts (via the second extracellular domain) with integrin ITGAV:ITGB3. Interacts with ITGA3; this interaction modulates ITGA3 glycosylation pattern. Interacts with F11R. Interacts with RAC1 and CDC42; these interactions mediate physical association of RAC1 and CDC42 with integrin adhesion receptor complexes. In terms of processing, palmitoylated. Palmitoylation by ZDHHC2 regulates CD151 expression, association with other tetraspanin family proteins and function in cell adhesion. Post-translationally, ubiquitinated by RNF128 on lysine residues present in the tetraspanin amino terminus via 'Lys-48'-linked ubiquitin leading to proteasomal degradation.

Its subcellular location is the cell membrane. Structural component of specialized membrane microdomains known as tetraspanin-enriched microdomains (TERMs), which act as platforms for receptor clustering and signaling. Plays a role in various cellular and molecular mechanism through its association with both integrin and non-integrin proteins. These interactions facilitate critical cellular functions, including cell-to-cell communication, wound healing, platelet aggregation, trafficking, cell motility, and angiogenesis. Via interaction with JAM-A/F11R and integrin ITGA3:ITGB1, promotes the recruitment of signaling molecules such as RAC1, CDC42 and RhoGTPases to facilitate the polarization of epithelial cells and the reorganization of the actin cytoskeleton, which are critical steps in cell migration process. Regulates the glycosylation pattern of ITGA3:ITGB1 thereby modulating its activity. Plays an essential role in the maintenance of central laminin-binding integrin ITGA6:ITGB4-containing adhesion complexes. Essential for the proper assembly of the glomerular and tubular basement membranes in kidney. Contributes to T-cell activation by modulating integrin signaling leading to activation of downstream targets PTK2 and MAPK1/MAPK3. The chain is CD151 antigen (Cd151) from Rattus norvegicus (Rat).